Reading from the N-terminus, the 266-residue chain is MVLNWRGVKSRLYSGKRRIDGRNKGLIAIRSRGGALKRKYRYIEHYKQKWMDKWLFVMRIEYDPNRSAHIALCSILKEGIYFYVISIAKLEVGSLIITSALKLGTLQVGNTTKIKNIPEGLLINNIELIENSGSKISRAAGTSSLIIKKYNKKYSLVKLSSKECRLISNECYATIGTVSNIERKLKQNKKASYSRKRGIRPIVRGLAMNPVDHPHGGRTKGGVHWKSFSGKLAYNVSSRKKTKMTSRYIIIGHRKQKIMDKQIKNG.

This sequence belongs to the universal ribosomal protein uL2 family.

The protein localises to the mitochondrion. In Dictyostelium discoideum (Social amoeba), this protein is Large ribosomal subunit protein uL2m (mrpl2).